The following is a 199-amino-acid chain: Adenylate kinase (199 aa).

10–15 (GAGKGT) is a binding site for ATP. Residues 30–59 (STGDMLRAAVAARTPVGLQAKSIMESGGLV) are NMP. Residues Thr31, Arg36, 57-59 (GLV), 85-88 (GFPR), and Gln92 contribute to the AMP site. The segment at 126-142 (KRAAETLARGEAVRKDD) is LID. Position 127 (Arg127) interacts with ATP. Arg139 and Arg150 together coordinate AMP. Residue Ala178 coordinates ATP.

It belongs to the adenylate kinase family. Monomer.

Its subcellular location is the cytoplasm. The enzyme catalyses AMP + ATP = 2 ADP. It functions in the pathway purine metabolism; AMP biosynthesis via salvage pathway; AMP from ADP: step 1/1. Its function is as follows. Catalyzes the reversible transfer of the terminal phosphate group between ATP and AMP. Plays an important role in cellular energy homeostasis and in adenine nucleotide metabolism. The sequence is that of Adenylate kinase from Methylobacterium nodulans (strain LMG 21967 / CNCM I-2342 / ORS 2060).